A 631-amino-acid chain; its full sequence is Protein FRIABLE 1 (631 aa).

Residues 1–13 (MSVGVPVNPSSSS) are compositionally biased toward low complexity. The tract at residues 1-36 (MSVGVPVNPSSSSQLPAAPTTTTRRRVADSQEDHSH) is disordered. Residues 1-120 (MSVGVPVNPS…NMRSTTNLGR (120 aa)) are Cytoplasmic-facing. Basic and acidic residues predominate over residues 26 to 36 (RVADSQEDHSH). Residues 121–141 (FILTLLSILVVTFFLIVALSG) form a helical; Signal-anchor for type II membrane protein membrane-spanning segment. At 142–631 (GVGRRRKHVE…RPSLRAQSLR (490 aa)) the chain is on the lumenal side. N-linked (GlcNAc...) asparagine glycosylation is found at Asn246, Asn329, and Asn364. Residue 384-386 (HLR) coordinates substrate. 2 N-linked (GlcNAc...) asparagine glycosylation sites follow: Asn398 and Asn425.

It belongs to the glycosyltransferase GT106 family. As to expression, ubiquitous. Strong expression in young seedlings, particularly at the junction between hypocotyl and root, in emerging cotyledons, and in parts of the roots. Also detected in the inflorescence (sepals, petals, mature pollen and siliques) and rosette leaves.

It is found in the golgi apparatus membrane. The protein operates within glycan metabolism. In terms of biological role, glycosyltransferase required for normal cell adhesion and cell wall integrity. The chain is Protein FRIABLE 1 from Arabidopsis thaliana (Mouse-ear cress).